The following is a 378-amino-acid chain: Mannitol-1-phosphate 5-dehydrogenase (378 aa).

Serine 4 to glycine 15 is a binding site for NAD(+).

It belongs to the mannitol dehydrogenase family.

The enzyme catalyses D-mannitol 1-phosphate + NAD(+) = beta-D-fructose 6-phosphate + NADH + H(+). This is Mannitol-1-phosphate 5-dehydrogenase from Streptococcus pneumoniae (strain 70585).